Consider the following 867-residue polypeptide: Probable potassium transporter 15 (867 aa).

The span at 1-13 (MAASSSSSASASA) shows a compositional bias: low complexity. The segment at 1–88 (MAASSSSSAS…EGEGEDGEKQ (88 aa)) is disordered. The Cytoplasmic segment spans residues 1–124 (MAASSSSSAS…DSEEFDFGRT (124 aa)). Positions 32 to 44 (TEEDDEGEEDGDT) are enriched in acidic residues. The span at 45-54 (VEAAAAAVGA) shows a compositional bias: low complexity. The span at 63–84 (SEEEEDEEDGGGGGEGEGEGED) shows a compositional bias: acidic residues. The chain crosses the membrane as a helical span at residues 125-145 (MFLALQTLAVVFGDIGISPLY). The Extracellular segment spans residues 146–167 (TFDVMFSKYPILGEEDVLGALS). Residues 168–188 (LVLYTLISMPLVKYVLVVLWA) traverse the membrane as a helical segment. Residues 189 to 252 (NDDGEGGIFA…KLESSLLLKK (64 aa)) lie on the Cytoplasmic side of the membrane. Residues 253–273 (LLLGLVLFGTAMFISNGVITP) form a helical membrane-spanning segment. Topologically, residues 274-285 (AMSVLSAVSGLK) are extracellular. The chain crosses the membrane as a helical span at residues 286–306 (VGIPNASQGLVVMISVVLLVI). Residues 307–317 (LYSVQRYATSK) are Cytoplasmic-facing. Residues 318–338 (MGFALGPSLLIWFCCLGGIGI) form a helical membrane-spanning segment. The Extracellular portion of the chain corresponds to 339–365 (YNLSTYGPAAFKAFNPLYIIYYFGRNP). An N-linked (GlcNAc...) asparagine glycan is attached at asparagine 340. A helical membrane pass occupies residues 366 to 386 (FQAWLSLAGCLLCATGSEAIF). Over 387–400 (ANLSYFPVRYVQSM) the chain is Cytoplasmic. The chain crosses the membrane as a helical span at residues 401 to 421 (FALLVLPCLVLAYLGQGAFLI). Residues 422 to 433 (ANQNSSEQIFFS) are Extracellular-facing. The N-linked (GlcNAc...) asparagine glycan is linked to asparagine 425. A helical membrane pass occupies residues 434-454 (SIPSGVFWPVFLIANLAALIA). Residues 455-490 (SRTMTTAIFQCLKQSIALGCFPRLKIIHTSRKFMAK) are Cytoplasmic-facing. A helical membrane pass occupies residues 491-511 (IYIPVVNWFLLFSCLGFILLF). Residues 512–522 (RSIYDVGNAYA) lie on the Extracellular side of the membrane. Residues 523–543 (IAELGVMIMATVYVTIIMLLI) form a helical membrane-spanning segment. At 544 to 545 (WE) the chain is on the cytoplasmic side. A helical membrane pass occupies residues 546–566 (TSIVKVLSFVITFLSLELVFF). Residues 567–572 (SSSLSS) are Extracellular-facing. Residues 573–593 (VGDGGWALIIFASGILMVMFI) traverse the membrane as a helical segment. The Cytoplasmic segment spans residues 594-867 (WNYGSKLKYD…VMQVRLTSYV (274 aa)).

Belongs to the HAK/KUP transporter (TC 2.A.72.3) family.

It is found in the membrane. In terms of biological role, high-affinity potassium transporter. This is Probable potassium transporter 15 (HAK15) from Oryza sativa subsp. japonica (Rice).